The primary structure comprises 68 residues: Protein ShdD (68 aa).

Functionally, involved in the non-oxidative decarboxylation and detoxification of phenolic derivatives under anaerobic conditions, however the precise biochemical function of ShdD in metabolism of phenolic acid is unknown. This chain is Protein ShdD, found in Sedimentibacter hydroxybenzoicus (Clostridium hydroxybenzoicum).